The chain runs to 107 residues: Flagellar hook-basal body complex protein FliE (107 aa).

It belongs to the FliE family.

It localises to the bacterial flagellum basal body. The sequence is that of Flagellar hook-basal body complex protein FliE from Sodalis glossinidius (strain morsitans).